The sequence spans 456 residues: 26S proteasome non-ATPase regulatory subunit 12 (456 aa).

Ala-2 carries the post-translational modification N-acetylalanine. Lys-92 is covalently cross-linked (Glycyl lysine isopeptide (Lys-Gly) (interchain with G-Cter in SUMO1); alternate). Residue Lys-92 forms a Glycyl lysine isopeptide (Lys-Gly) (interchain with G-Cter in SUMO2); alternate linkage. Lys-221 and Lys-368 each carry N6-acetyllysine. A PCI domain is found at 242–420; that stretch reads SICKHYRAIY…GIINFQRPKD (179 aa).

The protein belongs to the proteasome subunit p55 family. As to quaternary structure, component of the 19S proteasome regulatory particle complex. The 26S proteasome consists of a 20S core particle (CP) and two 19S regulatory subunits (RP). The regulatory particle is made of a lid composed of 9 subunits including PSMD12, a base containing 6 ATPases and few additional components. Interacts with ERCC6.

In terms of biological role, component of the 26S proteasome, a multiprotein complex involved in the ATP-dependent degradation of ubiquitinated proteins. This complex plays a key role in the maintenance of protein homeostasis by removing misfolded or damaged proteins, which could impair cellular functions, and by removing proteins whose functions are no longer required. Therefore, the proteasome participates in numerous cellular processes, including cell cycle progression, apoptosis, or DNA damage repair. This chain is 26S proteasome non-ATPase regulatory subunit 12 (PSMD12), found in Pongo abelii (Sumatran orangutan).